Reading from the N-terminus, the 575-residue chain is Glycine--tRNA ligase (575 aa).

Positions 96 and 162 each coordinate substrate. ATP-binding positions include Arg-194 to Glu-196, Ile-204 to Phe-209, Glu-327 to Cys-328, and Gly-450 to Arg-453. Phe-209–Glu-213 contributes to the substrate binding site. Substrate is bound at residue Glu-446–Gly-450.

It belongs to the class-II aminoacyl-tRNA synthetase family.

The protein resides in the cytoplasm. It catalyses the reaction tRNA(Gly) + glycine + ATP = glycyl-tRNA(Gly) + AMP + diphosphate. Its function is as follows. Catalyzes the attachment of glycine to tRNA(Gly). The chain is Glycine--tRNA ligase from Methanococcus maripaludis (strain C5 / ATCC BAA-1333).